The following is a 315-amino-acid chain: tRNA dimethylallyltransferase (315 aa).

G13–T20 provides a ligand contact to ATP. T15–T20 contributes to the substrate binding site. The segment at D38–Q41 is interaction with substrate tRNA.

This sequence belongs to the IPP transferase family. As to quaternary structure, monomer. Mg(2+) serves as cofactor.

The enzyme catalyses adenosine(37) in tRNA + dimethylallyl diphosphate = N(6)-dimethylallyladenosine(37) in tRNA + diphosphate. Functionally, catalyzes the transfer of a dimethylallyl group onto the adenine at position 37 in tRNAs that read codons beginning with uridine, leading to the formation of N6-(dimethylallyl)adenosine (i(6)A). The chain is tRNA dimethylallyltransferase from Staphylococcus saprophyticus subsp. saprophyticus (strain ATCC 15305 / DSM 20229 / NCIMB 8711 / NCTC 7292 / S-41).